Consider the following 213-residue polypeptide: FMN-dependent NADH:quinone oxidoreductase 1 (213 aa).

Position 18-20 (18-20 (SVS)) interacts with FMN.

The protein belongs to the azoreductase type 1 family. In terms of assembly, homodimer. The cofactor is FMN.

The enzyme catalyses 2 a quinone + NADH + H(+) = 2 a 1,4-benzosemiquinone + NAD(+). It carries out the reaction N,N-dimethyl-1,4-phenylenediamine + anthranilate + 2 NAD(+) = 2-(4-dimethylaminophenyl)diazenylbenzoate + 2 NADH + 2 H(+). In terms of biological role, quinone reductase that provides resistance to thiol-specific stress caused by electrophilic quinones. Also exhibits azoreductase activity. Catalyzes the reductive cleavage of the azo bond in aromatic azo compounds to the corresponding amines. The polypeptide is FMN-dependent NADH:quinone oxidoreductase 1 (Bacillus cereus (strain ATCC 10987 / NRS 248)).